Consider the following 1235-residue polypeptide: Gem-associated protein 5 (1235 aa).

The stretch at 55-102 (STRINILALDVSPMWGLGNGGPTKPFAIVGDDLSVQVWDCALGEAVIG) is one WD 1 repeat. The interval 227–263 (NNLALSAEEWRSRNGGQEEKPKTKPPPLTKSKAAESD) is disordered. Positions 234 to 248 (EEWRSRNGGQEEKPK) are enriched in basic and acidic residues. Ser289, Ser290, Ser351, and Ser354 each carry phosphoserine. Residues 340–368 (DCEPTKPTGPLSDASTISNKNDASDSTEG) form a disordered region. Over residues 352–368 (DASTISNKNDASDSTEG) the composition is skewed to polar residues. Thr355 bears the Phosphothreonine mark. Ser357 is subject to Phosphoserine. Residue Thr411 is modified to Phosphothreonine. WD repeat units lie at residues 428–469 (ISAE…HAGK), 475–512 (KTAG…KMLR), 565–605 (TVAF…TSCL), 611–650 (YVSS…VKTH), 690–730 (TIVN…EKSW), 739–779 (LFAR…RNWK), and 788–828 (TEKA…KPPL). The LXXLL motif motif lies at 443–447 (LETLL). The span at 963–980 (KEQNNRSAKECPKCKEQS) shows a compositional bias: basic and acidic residues. A disordered region spans residues 963–983 (KEQNNRSAKECPKCKEQSPDS).

In terms of assembly, component of the core survival motor neuron (SMN) complex composed of Smn, Gem2, Gem3, rig/Gem5 and one of 3 almost identical Gem4 paralogs encoded by Glos/Gem4a, Gem4b or Gem4c. Interacts with nuclear receptors EcR, svp (seven up), usp (ultraspiracle), Hr39 and Hr3. In terms of tissue distribution, expressed in the brain and salivary glands of early and late second instar larvae. Expressed in nurse cells and oocytes.

Its subcellular location is the nucleus. The protein localises to the cytoplasm. It localises to the U-body. The protein resides in the gem. Its function is as follows. Component of the survival motor neuron (SMN) complex that catalyzes the assembly of small nuclear ribonucleoproteins (snRNPs), the building blocks of the spliceosome, and thereby plays an important role in the splicing of cellular pre-mRNAs. Nuclear receptor cofactor for the ecdysone-regulated processes of molting and puparium formation. Acts downstream from ecdysone biosynthesis and release to control the expression of specific ecdysone-regulated genes such as Eip74EF (E74). Essential in muscle and neuronal tissues for motor function, including climbing ability and flight. The chain is Gem-associated protein 5 from Drosophila melanogaster (Fruit fly).